A 473-amino-acid polypeptide reads, in one-letter code: Probable DNA N(6)-methyladenine demethylase ALKBH1B (473 aa).

357 to 359 (NFY) is a 2-oxoglutarate binding site. Fe cation is bound by residues H368, D391, and H449. A 2-oxoglutarate-binding site is contributed by 461–465 (RLFFR).

The protein belongs to the alkB family. Requires Fe(2+) as cofactor. As to expression, undetectable.

The enzyme catalyses an N(6)-methyl-2'-deoxyadenosine in DNA + 2-oxoglutarate + O2 = a 2'-deoxyadenosine in DNA + formaldehyde + succinate + CO2. Dioxygenase that may catalyzes DNA N(6)-methyladenine (6 mA) demethylation. Requires molecular oxygen, alpha-ketoglutarate and iron. The chain is Probable DNA N(6)-methyladenine demethylase ALKBH1B from Arabidopsis thaliana (Mouse-ear cress).